A 358-amino-acid polypeptide reads, in one-letter code: F-box/kelch-repeat protein SKIP4 (358 aa).

An F-box domain is found at 20 to 67 (ALISGVPDDISKSCLARVPREYHMAMKCVSRRWRDFVCSDEMCDYRNE). Kelch repeat units lie at residues 78-122 (LCRD…VLGK), 123-171 (RLFV…TLDG), 173-219 (IIAI…VMDG), 220-269 (RIYI…VLDQ), 271-307 (FGAK…SIGN), and 308-355 (SIFV…SCKS).

Part of a SCF (SKP1-cullin-F-box) protein ligase complex. Interacts with SKP1A/ASK1.

Its pathway is protein modification; protein ubiquitination. This is F-box/kelch-repeat protein SKIP4 (SKIP4) from Arabidopsis thaliana (Mouse-ear cress).